Reading from the N-terminus, the 608-residue chain is Glutamine--fructose-6-phosphate aminotransferase [isomerizing] (608 aa).

Cysteine 2 acts as the Nucleophile; for GATase activity in catalysis. A Glutamine amidotransferase type-2 domain is found at 2–217 (CGIVGYIGKK…DNEFVLMTKD (216 aa)). SIS domains lie at 284-424 (ISKE…EKGT) and 453-598 (IMKK…VDKP). Lysine 603 serves as the catalytic For Fru-6P isomerization activity.

Homodimer.

It localises to the cytoplasm. The enzyme catalyses D-fructose 6-phosphate + L-glutamine = D-glucosamine 6-phosphate + L-glutamate. In terms of biological role, catalyzes the first step in hexosamine metabolism, converting fructose-6P into glucosamine-6P using glutamine as a nitrogen source. The chain is Glutamine--fructose-6-phosphate aminotransferase [isomerizing] from Clostridium tetani (strain Massachusetts / E88).